A 456-amino-acid chain; its full sequence is Equilibrative nucleoside transporter 1 (456 aa).

The Cytoplasmic segment spans residues 2–12 (TTSHQPQDRYK). The helical transmembrane segment at 13–29 (AVWLIFFMLGLGTLLPW) threads the bilayer. At 30–82 (NFFMTATQYFTNRLDMSQNVSLVTAELSKDAQASAAPAAPLPERNSLSAIFNN) the chain is on the extracellular side. Residue N48 is glycosylated (N-linked (GlcNAc...) asparagine). Residues 83-107 (VMTLCAMLPLLLFTYLNSFLHQRIP) traverse the membrane as a helical segment. Topologically, residues 108–111 (QSVR) are cytoplasmic. A helical membrane pass occupies residues 112-130 (ILGSLVAILLVFLITAILV). Residues 131–138 (KVQLDALP) are Extracellular-facing. A helical membrane pass occupies residues 139 to 157 (FFVITMIKIVLINSFGAIL). Residues 158 to 174 (QGSLFGLAGLLPASYTA) are Cytoplasmic-facing. A helical membrane pass occupies residues 175–199 (PIMSGQGLAGFFASVAMICAIASGS). Residues 200–206 (ELSESAF) lie on the Extracellular side of the membrane. Residues 207–227 (GYFITACAVIILTIICYLGLP) form a helical membrane-spanning segment. At 228-291 (RLEFYRYYQQ…IKAILKNISV (64 aa)) the chain is on the cytoplasmic side. 3 positions are modified to phosphoserine: S254, S269, and S273. The segment covering 254-266 (SKGEEPRAGKEES) has biased composition (basic and acidic residues). The interval 254–276 (SKGEEPRAGKEESGVSVSNSQPT) is disordered. The chain crosses the membrane as a helical span at residues 292 to 311 (LAFSVCFIFTITIGMFPAVT). At 312–323 (VEVKSSIAGSST) the chain is on the extracellular side. A helical membrane pass occupies residues 324-342 (WERYFIPVSCFLTFNIFDW). Residues 343–359 (LGRSLTAVFMWPGKDSR) are Cytoplasmic-facing. Residues 360–378 (WLPSLVLARLVFVPLLLLC) traverse the membrane as a helical segment. At 379 to 393 (NIKPRRYLTVVFEHD) the chain is on the extracellular side. Residues 394–413 (AWFIFFMAAFAFSNGYLASL) form a helical membrane-spanning segment. Over 414–431 (CMCFGPKKVKPAEAETAG) the chain is Cytoplasmic. The helical transmembrane segment at 432–452 (AIMAFFLCLGLALGAVFSFLF) threads the bilayer. Residues 453-456 (RAIV) are Extracellular-facing.

The protein belongs to the SLC29A/ENT transporter (TC 2.A.57) family. As to quaternary structure, identified in a complex with STOM. In terms of processing, glycosylated. Expressed in testis at the blood-testis barrier (at protein level). Detected in erythrocytes (at protein level). Expressed at relatively high levels in cerebral cortex, particularly the frontal and parietal lobes, and the thalamus and basal ganglia (at protein level). In the midbrain expressed at moderate levels, whereas in the other areas of the brainstem, namely medulla and pons, cerebellum and the hippocampus expressed at lower amounts when compared to the other brain regions (at protein level). Expressed in Langerhans cells and lymphocytes in the pancreas (at protein level). Expressed in kidney, in polarized renal epithelial cells. Expressed in adipose tissues. Expressed in placenta. Expressed in small intestine.

The protein resides in the basolateral cell membrane. The protein localises to the apical cell membrane. Its subcellular location is the cell membrane. It catalyses the reaction adenosine(in) = adenosine(out). It carries out the reaction guanosine(in) = guanosine(out). The catalysed reaction is inosine(in) = inosine(out). The enzyme catalyses uridine(out) = uridine(in). It catalyses the reaction thymidine(in) = thymidine(out). It carries out the reaction cytidine(in) = cytidine(out). The catalysed reaction is adenine(out) = adenine(in). The enzyme catalyses guanine(out) = guanine(in). It catalyses the reaction thymine(out) = thymine(in). It carries out the reaction uracil(in) = uracil(out). The catalysed reaction is hypoxanthine(out) = hypoxanthine(in). With respect to regulation, transporter activity is sensitive to low concentrations of the inhibitor nitrobenzylmercaptopurine riboside (NBMPR). Inhibited by dilazep. Inhibited by dipyridamole. Inhibited by hypoxanthine. Inhibited by azidothymidine (AZT). Inhibited by dideoxycytidine (ddC). Inhibited by dideoxyinosine (ddI). Inhibited by draflazine. Inhibited by soluflazine. Inhibited by cladribine. Inhibited by capecitabine. Inhibited by clofarabine. Inhibited by ribavirin. Modestly inhibited by acyclovir. Modestly inhibited by 5-fluorouracil. Uniporter involved in the facilitative transport of nucleosides and nucleobases, and contributes to maintaining their cellular homeostasis. Functions as a Na(+)-independent transporter. Involved in the transport of nucleosides such as adenosine, guanosine, inosine, uridine, thymidine and cytidine. Also transports purine nucleobases (hypoxanthine, adenine, guanine) and pyrimidine nucleobases (thymine, uracil). Mediates basolateral nucleoside uptake into Sertoli cells, thereby regulating the transport of nucleosides in testis across the blood-testis barrier. Regulates inosine levels in brown adipocytes tissues (BAT) and extracellular inosine levels, which controls BAT-dependent energy expenditure. This is Equilibrative nucleoside transporter 1 from Homo sapiens (Human).